A 251-amino-acid chain; its full sequence is Aliphatic sulfonates import ATP-binding protein SsuB (251 aa).

One can recognise an ABC transporter domain in the interval 3-231 (VSINEVSKYF…PRNKTSQSFQ (229 aa)). ATP is bound at residue 39–46 (GPSGCGKS).

The protein belongs to the ABC transporter superfamily. Aliphatic sulfonates importer (TC 3.A.1.17.2) family. As to quaternary structure, the complex is composed of two ATP-binding proteins (SsuB), two transmembrane proteins (SsuC) and a solute-binding protein (SsuA).

It is found in the cell membrane. The catalysed reaction is ATP + H2O + aliphatic sulfonate-[sulfonate-binding protein]Side 1 = ADP + phosphate + aliphatic sulfonateSide 2 + [sulfonate-binding protein]Side 1.. Functionally, part of the ABC transporter complex SsuABC involved in aliphatic sulfonates import. Responsible for energy coupling to the transport system. This Bacillus anthracis protein is Aliphatic sulfonates import ATP-binding protein SsuB.